The primary structure comprises 476 residues: Ribulose bisphosphate carboxylase large chain (476 aa).

Residues asparagine 124 and threonine 174 each contribute to the substrate site. The Proton acceptor role is filled by lysine 176. Residue lysine 178 coordinates substrate. Mg(2+)-binding residues include lysine 202, aspartate 204, and glutamate 205. An N6-carboxylysine modification is found at lysine 202. Histidine 295 (proton acceptor) is an active-site residue. 3 residues coordinate substrate: arginine 296, histidine 328, and serine 380.

Belongs to the RuBisCO large chain family. Type I subfamily. In terms of assembly, heterohexadecamer of 8 large chains and 8 small chains; disulfide-linked. The disulfide link is formed within the large subunit homodimers. Mg(2+) is required as a cofactor. In terms of processing, the disulfide bond which can form in the large chain dimeric partners within the hexadecamer appears to be associated with oxidative stress and protein turnover.

Its subcellular location is the carboxysome. It carries out the reaction 2 (2R)-3-phosphoglycerate + 2 H(+) = D-ribulose 1,5-bisphosphate + CO2 + H2O. The catalysed reaction is D-ribulose 1,5-bisphosphate + O2 = 2-phosphoglycolate + (2R)-3-phosphoglycerate + 2 H(+). Its function is as follows. RuBisCO catalyzes two reactions: the carboxylation of D-ribulose 1,5-bisphosphate, the primary event in carbon dioxide fixation, as well as the oxidative fragmentation of the pentose substrate in the photorespiration process. Both reactions occur simultaneously and in competition at the same active site. The polypeptide is Ribulose bisphosphate carboxylase large chain (Acaryochloris marina (strain MBIC 11017)).